Reading from the N-terminus, the 195-residue chain is UDP-N-acetylbacillosamine N-acetyltransferase (195 aa).

Substrate contacts are provided by residues 13–15 (SGH), 35–36 (DD), and Gly-56. Catalysis depends on His-125, which acts as the Proton acceptor. Acetyl-CoA contacts are provided by His-134, Ile-155, and Gly-173.

This sequence belongs to the transferase hexapeptide repeat family. Homotrimer.

It catalyses the reaction UDP-N-acetylbacillosamine + acetyl-CoA = UDP-N,N'-diacetylbacillosamine + CoA + H(+). The protein operates within protein modification; protein glycosylation. Its function is as follows. Acetyltransferase that modifies the UDP-4-amino-sugar to form UDP-N,N'-diacetylbacillosamine in the N-linked protein glycosylation pathway. This Campylobacter jejuni subsp. jejuni serotype O:2 (strain ATCC 700819 / NCTC 11168) protein is UDP-N-acetylbacillosamine N-acetyltransferase (pglD).